Here is a 183-residue protein sequence, read N- to C-terminus: Ferritin heavy chain (183 aa).

M1 bears the N-acetylmethionine mark. T2 carries the N-acetylthreonine; in Ferritin heavy chain, N-terminally processed modification. Residues 11 to 160 form the Ferritin-like diiron domain; sequence QNYHQDSEAA…DHVTNLRKMG (150 aa). Residues E28, E63, H66, E108, and Q142 each coordinate Fe cation. Phosphoserine occurs at positions 179 and 183.

This sequence belongs to the ferritin family. Oligomer of 24 subunits. There are two types of subunits: L (light) chain and H (heavy) chain. The major chain can be light or heavy, depending on the species and tissue type. In the human liver, the heavy chain is predominant. The functional molecule forms a roughly spherical shell with a diameter of 12 nm and contains a central cavity into which the insoluble mineral iron core is deposited. Interacts with NCOA4; NCOA4 promotes targeting of the iron-binding ferritin complex to autolysosomes following starvation or iron depletion. Expressed in the liver.

It localises to the cytoplasm. The protein localises to the lysosome. It is found in the cytoplasmic vesicle. Its subcellular location is the autophagosome. It carries out the reaction 4 Fe(2+) + O2 + 4 H(+) = 4 Fe(3+) + 2 H2O. Functionally, stores iron in a soluble, non-toxic, readily available form. Important for iron homeostasis. Has ferroxidase activity. Iron is taken up in the ferrous form and deposited as ferric hydroxides after oxidation. Also plays a role in delivery of iron to cells. Mediates iron uptake in capsule cells of the developing kidney. Delivery to lysosomes is mediated by the cargo receptor NCOA4 for autophagic degradation and release of iron. The sequence is that of Ferritin heavy chain (FTH1) from Homo sapiens (Human).